A 187-amino-acid polypeptide reads, in one-letter code: Tumor necrosis factor ligand superfamily member 4 (187 aa).

The Cytoplasmic portion of the chain corresponds to Met1–Lys23. Residues Leu24–Cys44 traverse the membrane as a helical; Signal-anchor for type II membrane protein segment. Residues Gln45–Pro187 are Extracellular-facing. Positions Pro58–Ile177 constitute a THD domain. Intrachain disulfides connect Cys74–Cys164 and Cys101–Cys185. Residues Asn94 and Asn156 are each glycosylated (N-linked (GlcNAc...) asparagine).

This sequence belongs to the tumor necrosis factor family. In terms of assembly, homotrimer.

Its subcellular location is the membrane. Functionally, cytokine that binds to TNFRSF4. Co-stimulates T-cell proliferation and cytokine production. This Oryctolagus cuniculus (Rabbit) protein is Tumor necrosis factor ligand superfamily member 4 (TNFSF4).